A 98-amino-acid chain; its full sequence is NADH-ubiquinone oxidoreductase chain 4L (98 aa).

3 helical membrane passes run 1 to 21, 29 to 49, and 61 to 81; these read MSLI…GLLM, ALLC…LTIL, and IILL…LVMI.

The protein belongs to the complex I subunit 4L family. As to quaternary structure, core subunit of respiratory chain NADH dehydrogenase (Complex I) which is composed of 45 different subunits.

It localises to the mitochondrion inner membrane. The catalysed reaction is a ubiquinone + NADH + 5 H(+)(in) = a ubiquinol + NAD(+) + 4 H(+)(out). In terms of biological role, core subunit of the mitochondrial membrane respiratory chain NADH dehydrogenase (Complex I) which catalyzes electron transfer from NADH through the respiratory chain, using ubiquinone as an electron acceptor. Part of the enzyme membrane arm which is embedded in the lipid bilayer and involved in proton translocation. This chain is NADH-ubiquinone oxidoreductase chain 4L (MT-ND4L), found in Berardius bairdii (Baird's beaked whale).